A 148-amino-acid chain; its full sequence is uncharacterized protein (148 aa).

This is an uncharacterized protein from Haemophilus influenzae (strain ATCC 51907 / DSM 11121 / KW20 / Rd).